A 204-amino-acid chain; its full sequence is Large ribosomal subunit protein eL15 (204 aa).

The disordered stretch occupies residues 185–204; that stretch reads GGSRRAAWKRKNREHMHRKR. Over residues 190–204 the composition is skewed to basic residues; that stretch reads AAWKRKNREHMHRKR.

It belongs to the eukaryotic ribosomal protein eL15 family.

The sequence is that of Large ribosomal subunit protein eL15 (RpL15) from Drosophila melanogaster (Fruit fly).